The following is a 307-amino-acid chain: Barttin (307 aa).

Residues 1-5 (MADEK) lie on the Cytoplasmic side of the membrane. A regulates channel membrane trafficking and anion conductance region spans residues 1–72 (MADEKTFRIG…VPADSDFQGI (72 aa)). Residues 6–26 (TFRIGFIVLGLFLLSLGTFLM) form a helical membrane-spanning segment. Topologically, residues 27-32 (SHDRPQ) are extracellular. The chain crosses the membrane as a helical span at residues 33–53 (VYGTFYAMGSVMVIGGVIWSM). S-palmitoyl cysteine attachment occurs at residues Cys-54 and Cys-56. Topologically, residues 54–307 (CQCYPKITFV…ELGFEPDIQG (254 aa)) are cytoplasmic. A phosphoserine mark is found at Ser-79 and Ser-107. 2 disordered regions span residues 135–154 (TGASSVREGEPRTAQAWMEA) and 161–224 (GSDE…RGPL). Positions 161–171 (GSDENEGEKSH) are enriched in basic and acidic residues. Residue Ser-162 is modified to Phosphoserine. Residues 172 to 183 (SQSSPSVGPQGS) show a composition bias toward low complexity. Over residues 198-207 (SEGSSLQPSP) the composition is skewed to polar residues. A phosphoserine mark is found at Ser-228 and Ser-289. Positions 255–307 (RKQQWSLRMKGETVQARAEEPEQEEEDLYYGLPDSPGNPLPDKELGFEPDIQG) are disordered.

Interacts with CLCNK channels. Forms probably heteromers with CLCNKA in the thin ascending limb of Henle and with CLCNKB in the thick ascending limb and more distal segments. In terms of processing, palmitoylation is necessary for activation of plasma membrane-inserted CLC-K/barttin channels. Expression is evident in inner and outer stripes of the outer medulla of the kidney, most probably representing thin limbs of Henle's loop together with some collecting duct coursing through the outer stripe. In situ hybridization in fetal kidney at 18.5 dpc revealed a clear continuity between hybridization signals from the thin limb of Henle's loop and the distal convoluted tubule, suggesting that part of the expression pattern may result from expression in the thick ascending limb of Henle's loop. In addition, strong signals are present in a subset of cortical tubules, representing distal convoluted tubules or cortical collecting duct. Strong expression is also observed in the inner medulla of the kidney. This expression does not extend all the way to the tip of the papilla. Thus this signal most probably represents cells of the thin ascending limbs. In the inner ear, strong and exclusive expression is detected in marginal cells of the stria vascularis. In addition to cochlear signal, expression is observed in dark cells localized at the base of the crista ampullaris of the vestibular organ.

The protein resides in the basolateral cell membrane. In terms of biological role, regulatory subunit of anion-selective CLCNKA:BSND and CLCNKB:BSND heteromeric channels involved in basolateral chloride conductance along the nephron to achieve urine concentration and maintain systemic acid-base homeostasis, and in the stria vascularis of the inner ear to establish the endocochlear potential necessary for normal hearing. Most likely acts as a chaperone that allosterically regulates proper sorting of CLCNKA:BSND and CLCNKB:BSND channels at the basolateral plasma membrane domain and functional switch to ion conducting state. Mediates constitutive opening of channel common gates. This is Barttin from Mus musculus (Mouse).